Here is a 273-residue protein sequence, read N- to C-terminus: HTH-type transcriptional activator RhaS (273 aa).

Positions 174-272 constitute an HTH araC/xylS-type domain; the sequence is YQLLDWLQNN…SQSPRDLRSQ (99 aa). 2 DNA-binding regions (H-T-H motif) span residues 191-212 and 239-262; these read PELA…KNKT and VTDI…KREF.

In terms of assembly, binds DNA as a dimer.

Its subcellular location is the cytoplasm. Activates expression of the rhaBAD and rhaT operons. This chain is HTH-type transcriptional activator RhaS, found in Yersinia pestis bv. Antiqua (strain Antiqua).